A 430-amino-acid polypeptide reads, in one-letter code: Cytochrome P450 monooxygenase FGSG_15680 (430 aa).

Residue Cys351 coordinates heme.

This sequence belongs to the cytochrome P450 family. Requires heme as cofactor.

It functions in the pathway mycotoxin biosynthesis. Functionally, cytochrome P450 monooxygenase; part of the gene cluster that mediates the biosynthesis of gramillins A and B, bicyclic lipopeptides that induce cell death in maize leaves but not in wheat leaves. The nonribosomal peptide synthetase GRA1 incorporates respectively a glutamic adic (Glu), a leucine (Leu), a serine (Ser), a hydroxyglutamine (HOGln), a 2-amino decanoic acid, and 2 cysteins (CysB and CysA). The biosynthesis of 2-amino decanoic acid incorporated in gramillins could be initiated by a fatty acid synthase composed of the alpha and beta subunits FGSG_00036 and FGSG_11656. The cytochrome P450 monooxygenase FGSG_15680 could hydroxylate the fatty acid chain. Subsequent oxidation to the ketone by the oxidoreductase FGSG_00048 and transamination by aminotransferase FGSG_00049 could form 2-amino-decanoic acid. On the other hand, FGSG_15680 could also be responsible for the HO-modified glutamine at the gamma-position. Whether hydroxylation occurs on the fully assembled product or on the Gln residue prior to assembly into the gramillins requires further proof. The thioredoxin FGSG_00043 could also be required for the disulfide-bond formation between CysA and CysB. The specific involvement of the remaining proteins from the cluster is more difficult to discern, but could have broader regulatory (FGSG_00040 and FGSG_11657) or enzymatic functions (FGSG_00044 and FGSG_00045). The final C-domain of GRA1 does not possess the expected sequence of a termination CT domain, often implicated in macrocyclization and release of a cyclopeptidein fungal NRPs; and the thioesterase FGSG_00047 may act in concert with the terminal C-domain of GRA1 to catalyze the formation of the macrocyclic anhydride and release of the products. This chain is Cytochrome P450 monooxygenase FGSG_15680, found in Gibberella zeae (strain ATCC MYA-4620 / CBS 123657 / FGSC 9075 / NRRL 31084 / PH-1) (Wheat head blight fungus).